The primary structure comprises 465 residues: Deoxyguanosinetriphosphate triphosphohydrolase-like protein (465 aa).

The interval 1–22 (MKWDKLLNDKRRRESGVTRSKN) is disordered. The region spanning 63–252 (RLTHSMEVST…LEVADDIAYL (190 aa)) is the HD domain.

This sequence belongs to the dGTPase family. Type 3 subfamily.

The protein is Deoxyguanosinetriphosphate triphosphohydrolase-like protein of Listeria monocytogenes serovar 1/2a (strain ATCC BAA-679 / EGD-e).